We begin with the raw amino-acid sequence, 203 residues long: Ribonuclease HII (203 aa).

The RNase H type-2 domain maps to 16–203; it reads ENIACCDEVG…HRKSFLNKIL (188 aa). A divalent metal cation is bound by residues aspartate 22, glutamate 23, and aspartate 120.

Belongs to the RNase HII family. It depends on Mn(2+) as a cofactor. Requires Mg(2+) as cofactor.

The protein resides in the cytoplasm. The enzyme catalyses Endonucleolytic cleavage to 5'-phosphomonoester.. Functionally, endonuclease that specifically degrades the RNA of RNA-DNA hybrids. In Alkaliphilus oremlandii (strain OhILAs) (Clostridium oremlandii (strain OhILAs)), this protein is Ribonuclease HII.